The chain runs to 193 residues: Large ribosomal subunit protein eL18 (193 aa).

Residues H158–K193 are disordered. Residues S183–K193 show a composition bias toward basic residues.

Belongs to the eukaryotic ribosomal protein eL18 family.

The protein localises to the cytoplasm. This Trypanosoma brucei brucei (strain 927/4 GUTat10.1) protein is Large ribosomal subunit protein eL18 (RPL18-A).